The following is a 311-amino-acid chain: MLSGLVIVDKPQGWTSHDVVGRMRRLAGTRKVGHAGTLDPMATGVLVLGINKATRLLTYIVGTSKTYTATIRLGETTITDDAEGEVTEARTAAHITDDAVAVGVAALTGPIQQVPSSVSAIKVNGERSYARVRSGEEVKLAARPVTIHRFDVHSITRIDGGRVVDVDVTVECSSGTYIRALARDLGNALGIGGHLTALRRTQVGPYSLDQARTLEELAEELEVLEMSLAARSLMPNRELSEQETTEISFGRRIAAGPGAGTPDAATAEKPAAAFAPSGELVALLADTGSFAKPVLVFAPGTGTGTGTGQAK.

Asp-39 acts as the Nucleophile in catalysis. The segment at 237-268 is disordered; the sequence is RELSEQETTEISFGRRIAAGPGAGTPDAATAE. Positions 254 to 268 are enriched in low complexity; the sequence is AAGPGAGTPDAATAE.

This sequence belongs to the pseudouridine synthase TruB family. Type 1 subfamily.

The enzyme catalyses uridine(55) in tRNA = pseudouridine(55) in tRNA. In terms of biological role, responsible for synthesis of pseudouridine from uracil-55 in the psi GC loop of transfer RNAs. This Paenarthrobacter aurescens (strain TC1) protein is tRNA pseudouridine synthase B.